The chain runs to 437 residues: tRNA-2-methylthio-N(6)-dimethylallyladenosine synthase (437 aa).

In terms of domain architecture, MTTase N-terminal spans 1-115 (MKVYIETMGC…ISQVIHKEKA (115 aa)). [4Fe-4S] cluster-binding residues include cysteine 10, cysteine 46, cysteine 78, cysteine 148, cysteine 152, and cysteine 155. The Radical SAM core domain occupies 134-367 (KKAQIRSLLN…QNRHKEILEE (234 aa)). The 67-residue stretch at 370-436 (KLEVGKTHVV…KGRLIAAIKG (67 aa)) folds into the TRAM domain.

It belongs to the methylthiotransferase family. MiaB subfamily. In terms of assembly, monomer. [4Fe-4S] cluster serves as cofactor.

It localises to the cytoplasm. The catalysed reaction is N(6)-dimethylallyladenosine(37) in tRNA + (sulfur carrier)-SH + AH2 + 2 S-adenosyl-L-methionine = 2-methylsulfanyl-N(6)-dimethylallyladenosine(37) in tRNA + (sulfur carrier)-H + 5'-deoxyadenosine + L-methionine + A + S-adenosyl-L-homocysteine + 2 H(+). Its function is as follows. Catalyzes the methylthiolation of N6-(dimethylallyl)adenosine (i(6)A), leading to the formation of 2-methylthio-N6-(dimethylallyl)adenosine (ms(2)i(6)A) at position 37 in tRNAs that read codons beginning with uridine. This chain is tRNA-2-methylthio-N(6)-dimethylallyladenosine synthase, found in Helicobacter pylori (strain P12).